A 294-amino-acid chain; its full sequence is 4-hydroxy-tetrahydrodipicolinate synthase (294 aa).

Residue T45 coordinates pyruvate. Catalysis depends on Y133, which acts as the Proton donor/acceptor. The active-site Schiff-base intermediate with substrate is K161. Position 203 (I203) interacts with pyruvate.

The protein belongs to the DapA family. Homotetramer; dimer of dimers.

The protein resides in the cytoplasm. The enzyme catalyses L-aspartate 4-semialdehyde + pyruvate = (2S,4S)-4-hydroxy-2,3,4,5-tetrahydrodipicolinate + H2O + H(+). The protein operates within amino-acid biosynthesis; L-lysine biosynthesis via DAP pathway; (S)-tetrahydrodipicolinate from L-aspartate: step 3/4. Catalyzes the condensation of (S)-aspartate-beta-semialdehyde [(S)-ASA] and pyruvate to 4-hydroxy-tetrahydrodipicolinate (HTPA). This Buchnera aphidicola subsp. Baizongia pistaciae (strain Bp) protein is 4-hydroxy-tetrahydrodipicolinate synthase.